A 349-amino-acid chain; its full sequence is Alanine racemase (349 aa).

The active-site Proton acceptor; specific for D-alanine is Lys-35. Lys-35 is modified (N6-(pyridoxal phosphate)lysine). Residue Arg-130 participates in substrate binding. The active-site Proton acceptor; specific for L-alanine is Tyr-244. Residue Met-292 coordinates substrate.

This sequence belongs to the alanine racemase family. Pyridoxal 5'-phosphate serves as cofactor.

It carries out the reaction L-alanine = D-alanine. The protein operates within amino-acid biosynthesis; D-alanine biosynthesis; D-alanine from L-alanine: step 1/1. In terms of biological role, catalyzes the interconversion of L-alanine and D-alanine. May also act on other amino acids. This Cereibacter sphaeroides (strain ATCC 17025 / ATH 2.4.3) (Rhodobacter sphaeroides) protein is Alanine racemase (alr).